The following is a 474-amino-acid chain: MTVKTRFAPSPTGYLHVGGARTALYSWLYAKSQGGEFVLRIEDTDLERSTQAAVDAIIEGMTWLGLEWDEGPYYQTKRFDRYNQVIDQLLAEGKAYKCYAPKELLDEIRAEQEANKEMPRYDANHPKIKAVNDAAKEGEPCCIRFRNPKEGSVVFDDQIRGRIEIRNDQLDDLIIRRTDGTPTYNFCVVVDDVDMGISHVIRGEDHINNTPRQINIYKAMGATIPTFAHCAMILGDDGAKLSKRHGAVSVMQYRDDGYLPEALLNYLVRLGWGHGDQEIFSRDEMINLFSLNAISKSASAFNTDKLLWLNNHYIKTSEPEYVAKHLEWHFENQGINKATGPALAEVVKLVGERCNTLVELAQQSRYFYEDFAEFDADAAKKHLRGVAKEPLMLALSKIEALTEWNTEALHHVIAQVCEELEIGMGKIGMPLRVAVTGGGQSPSVDAVMNLIGQERVIARIKMALEYIETREANA.

The 'HIGH' region signature appears at 9 to 19; that stretch reads PSPTGYLHVGG. Residues 240–244 carry the 'KMSKS' region motif; the sequence is KLSKR. Lys243 provides a ligand contact to ATP.

The protein belongs to the class-I aminoacyl-tRNA synthetase family. Glutamate--tRNA ligase type 1 subfamily. As to quaternary structure, monomer.

Its subcellular location is the cytoplasm. It catalyses the reaction tRNA(Glu) + L-glutamate + ATP = L-glutamyl-tRNA(Glu) + AMP + diphosphate. Functionally, catalyzes the attachment of glutamate to tRNA(Glu) in a two-step reaction: glutamate is first activated by ATP to form Glu-AMP and then transferred to the acceptor end of tRNA(Glu). The protein is Glutamate--tRNA ligase of Vibrio cholerae serotype O1 (strain ATCC 39315 / El Tor Inaba N16961).